The primary structure comprises 436 residues: S-locus-specific glycoprotein S6 (436 aa).

The first 31 residues, 1–31, serve as a signal peptide directing secretion; it reads MKGVRKPYDNSYTLSFLLVFFVLILFCPAFS. The Bulb-type lectin domain maps to 34 to 156; the sequence is TLSSTESLRI…SNNDASEYLW (123 aa). N-linked (GlcNAc...) asparagine glycosylation is found at N46, N64, N114, N121, N245, N261, and N390. In terms of domain architecture, PAN spans 351 to 431; sequence CSGDGFTRMK…HGQDLYVRLA (81 aa). 2 disulfide bridges follow: C381/C406 and C389/C391.

As to expression, stigma.

Functionally, involved in sporophytic self-incompatibility system (the inability of flowering plants to achieve self-fertilization). The protein is S-locus-specific glycoprotein S6 (SLSG) of Brassica oleracea (Wild cabbage).